The sequence spans 326 residues: Beta-ketoacyl-[acyl-carrier-protein] synthase III (326 aa).

Residues Cys-112 and His-251 contribute to the active site. The tract at residues 252–256 (QANSR) is ACP-binding. The active site involves Asn-281.

Belongs to the thiolase-like superfamily. FabH family. In terms of assembly, homodimer.

The protein resides in the cytoplasm. It carries out the reaction malonyl-[ACP] + acetyl-CoA + H(+) = 3-oxobutanoyl-[ACP] + CO2 + CoA. Its pathway is lipid metabolism; fatty acid biosynthesis. Catalyzes the condensation reaction of fatty acid synthesis by the addition to an acyl acceptor of two carbons from malonyl-ACP. Catalyzes the first condensation reaction which initiates fatty acid synthesis and may therefore play a role in governing the total rate of fatty acid production. Possesses both acetoacetyl-ACP synthase and acetyl transacylase activities. Its substrate specificity determines the biosynthesis of branched-chain and/or straight-chain of fatty acids. In Clostridium botulinum (strain Loch Maree / Type A3), this protein is Beta-ketoacyl-[acyl-carrier-protein] synthase III.